The sequence spans 129 residues: Prefoldin subunit alpha (129 aa).

It belongs to the prefoldin alpha subunit family. In terms of assembly, heterohexamer of two alpha and four beta subunits.

The protein resides in the cytoplasm. Its function is as follows. Molecular chaperone capable of stabilizing a range of proteins. Seems to fulfill an ATP-independent, HSP70-like function in archaeal de novo protein folding. The polypeptide is Prefoldin subunit alpha (Thermofilum pendens (strain DSM 2475 / Hrk 5)).